The sequence spans 457 residues: MALWGGRFTQAADQRFKQFNDSLRFDYRLAEQDIVGSVAWSKALVTVGVLTAEEQAQLEEALNVLLEDVRARPQQILESDAEDIHSWVEGKLIDKVGQLGKKLHTGRSRNDQVATDLKLWCKDTVSELLTANRQLQSALVETAQNNQDAVMPGYTHLQRAQPVTFAHWCLAYVEMLARDESRLQDALKRLDVSPLGCGALAGTAYEIDREQLAGWLGFASATRNSLDSVSDRDHVLELLSAAAIGMVHLSRFAEDLIFFNTGEAGFVELSDRVTSGSSLMPQKKNPDALELIRGKCGRVQGALTGMMMTLKGLPLAYNKDMQEDKEGLFDALDTWLDCLHMAALVLDGIQVKRPRCQEAAQQGYANATELADYLVAKGVPFREAHHIVGEAVVEAIRQGKPLEDLPLSELQKFSLVIGEDVYPILSLQSCLDKRAAKGGVSPQQVAQAIAFAQARLG.

Belongs to the lyase 1 family. Argininosuccinate lyase subfamily.

The protein localises to the cytoplasm. The catalysed reaction is 2-(N(omega)-L-arginino)succinate = fumarate + L-arginine. The protein operates within amino-acid biosynthesis; L-arginine biosynthesis; L-arginine from L-ornithine and carbamoyl phosphate: step 3/3. The sequence is that of Argininosuccinate lyase from Escherichia coli O127:H6 (strain E2348/69 / EPEC).